Reading from the N-terminus, the 357-residue chain is 3-isopropylmalate dehydrogenase (357 aa).

Substrate contacts are provided by arginine 97, arginine 107, arginine 135, and aspartate 224. Positions 224, 248, and 252 each coordinate Mg(2+). An NAD(+)-binding site is contributed by 282 to 294 (GSAPDIAGKNIAN).

The protein belongs to the isocitrate and isopropylmalate dehydrogenases family. LeuB type 1 subfamily. As to quaternary structure, homodimer. Mg(2+) serves as cofactor. Mn(2+) is required as a cofactor.

The protein resides in the cytoplasm. It carries out the reaction (2R,3S)-3-isopropylmalate + NAD(+) = 4-methyl-2-oxopentanoate + CO2 + NADH. Its pathway is amino-acid biosynthesis; L-leucine biosynthesis; L-leucine from 3-methyl-2-oxobutanoate: step 3/4. Catalyzes the oxidation of 3-carboxy-2-hydroxy-4-methylpentanoate (3-isopropylmalate) to 3-carboxy-4-methyl-2-oxopentanoate. The product decarboxylates to 4-methyl-2 oxopentanoate. The sequence is that of 3-isopropylmalate dehydrogenase from Prochlorococcus marinus (strain MIT 9312).